A 414-amino-acid polypeptide reads, in one-letter code: Putative MSV199 domain-containing protein 148R (414 aa).

The stretch at 209-293 (DKMQISSLET…DSVVEKLGIA (85 aa)) forms a coiled coil.

This Acheta domesticus (House cricket) protein is Putative MSV199 domain-containing protein 148R.